A 341-amino-acid polypeptide reads, in one-letter code: MTIQEELEAVKQQFSCDLSLVHSSKDLFDLKVKYLGKKGIFRGFADQLRECPVEQKATIGASINACKQYIEEVLLEKSQVILAKEEAEEFLKEKVDVSLPGEDAPLGGKHIIKKVLDDVVDIFVRFGFCVREAPNIESEKNNFSLLNFEEDHPARQMQDTFYLDPVTVLRTHTSNVQSRELARNKPPVRVVAPGECFRNEDISARSHVTFHQVEAFHVDRDVSFSDLTSMLSGFYHIFFGRKVELRYRHSYFPFVEPGIEVDISCECRGAGCSLCKHSGWLEVAGAGMIHPNVLRQANIDPEEYSGYALGMGIERLAMLKYGISDIRLFSENDLRFLRQFS.

Glu256 lines the Mg(2+) pocket.

This sequence belongs to the class-II aminoacyl-tRNA synthetase family. Phe-tRNA synthetase alpha subunit type 1 subfamily. In terms of assembly, tetramer of two alpha and two beta subunits. The cofactor is Mg(2+).

It localises to the cytoplasm. The catalysed reaction is tRNA(Phe) + L-phenylalanine + ATP = L-phenylalanyl-tRNA(Phe) + AMP + diphosphate + H(+). The polypeptide is Phenylalanine--tRNA ligase alpha subunit (pheS) (Chlamydia muridarum (strain MoPn / Nigg)).